Reading from the N-terminus, the 311-residue chain is ATP synthase subunit a (311 aa).

A run of 6 helical transmembrane segments spans residues 62 to 82 (AVHV…GFIF), 123 to 143 (IAPM…MDLI), 170 to 190 (DPNA…MFSI), 213 to 233 (LWYL…VALI), 253 to 273 (IFIL…VGGV), and 276 to 296 (WAWA…FMVL).

This sequence belongs to the ATPase A chain family. As to quaternary structure, F-type ATPases have 2 components, CF(1) - the catalytic core - and CF(0) - the membrane proton channel. CF(1) has five subunits: alpha(3), beta(3), gamma(1), delta(1), epsilon(1). CF(0) has three main subunits: a(1), b(2) and c(9-12). The alpha and beta chains form an alternating ring which encloses part of the gamma chain. CF(1) is attached to CF(0) by a central stalk formed by the gamma and epsilon chains, while a peripheral stalk is formed by the delta and b chains.

Its subcellular location is the cell inner membrane. Functionally, key component of the proton channel; it plays a direct role in the translocation of protons across the membrane. This is ATP synthase subunit a from Saccharophagus degradans (strain 2-40 / ATCC 43961 / DSM 17024).